The chain runs to 509 residues: GMP synthase [glutamine-hydrolyzing] (509 aa).

One can recognise a Glutamine amidotransferase type-1 domain in the interval 4–194 (LVLVVDFGGQ…LYNICGLENS (191 aa)). Residue Cys-81 is the Nucleophile of the active site. Active-site residues include His-168 and Glu-170. Positions 195 to 384 (WSMASFAEEK…LGIPHHLVWR (190 aa)) constitute a GMPS ATP-PPase domain. 222-228 (SGGVDSS) contributes to the ATP binding site.

In terms of assembly, homodimer.

The catalysed reaction is XMP + L-glutamine + ATP + H2O = GMP + L-glutamate + AMP + diphosphate + 2 H(+). It participates in purine metabolism; GMP biosynthesis; GMP from XMP (L-Gln route): step 1/1. Its function is as follows. Catalyzes the synthesis of GMP from XMP. This Clostridium perfringens (strain 13 / Type A) protein is GMP synthase [glutamine-hydrolyzing].